A 390-amino-acid chain; its full sequence is NADH-quinone oxidoreductase subunit D (390 aa).

This sequence belongs to the complex I 49 kDa subunit family. As to quaternary structure, NDH-1 is composed of 14 different subunits. Subunits NuoB, C, D, E, F, and G constitute the peripheral sector of the complex.

It localises to the cell inner membrane. It carries out the reaction a quinone + NADH + 5 H(+)(in) = a quinol + NAD(+) + 4 H(+)(out). Its function is as follows. NDH-1 shuttles electrons from NADH, via FMN and iron-sulfur (Fe-S) centers, to quinones in the respiratory chain. The immediate electron acceptor for the enzyme in this species is believed to be ubiquinone. Couples the redox reaction to proton translocation (for every two electrons transferred, four hydrogen ions are translocated across the cytoplasmic membrane), and thus conserves the redox energy in a proton gradient. This chain is NADH-quinone oxidoreductase subunit D, found in Geobacter metallireducens (strain ATCC 53774 / DSM 7210 / GS-15).